The following is a 514-amino-acid chain: MTTGADADARRTYDEERAYVSAVSPTKLVVAKGFVPNMRVPGEIYVNERLRELVLDELRAYCDEDRRGGGYSPAVKQIANVAALPGVVRASIALPDVHSGYGFAIGNVAAFDCGDDDAIVSPGGVGFDINCGVRLLRTNLTEAEVGPVKEALAQSLFDHIPVGVGSRGIIPTSPAALEAALEMGMDWSLREGYAWAEDKEHTEEYGRMLNADPSKVSARAKKRGLPQMGTLGAGNHYAEIQVVDEIYDEFAAKKMGIDRVGQICIMIHSGSRGLGHQVATDSLTAMERAMERDGIEVNDRQLACAKISSQEGQDYLAAMACAANYAWVNRSSMTFLCRQAFAKMFGKPPDELDMHVVYDVSHNIAKFEEHIVDGEMKTLLVHRKGSTRAFPPHHPLIPVDYQYTGQPVLIGGTMGTCSYILTGTEKGMRDTFGSTCHGAGRARSRNKSRHVLQYEDVLAKLKTKGIAIRVASPKLVMEEAPESYKDVTEVVNTCHDAGISKKCVKLRPIAVVKG.

The Mn(2+) site is built by aspartate 128, cysteine 131, histidine 236, histidine 268, and histidine 362. GMP is bound at residue 235-239; that stretch reads NHYAE. Residues 362–363, 411–414, serine 418, 437–440, and lysine 513 contribute to the GMP site; these read HN, GGTM, and HGAG. Residue histidine 437 is the GMP-histidine intermediate of the active site.

The protein belongs to the RtcB family. Catalytic component of the tRNA-splicing ligase complex. Mn(2+) is required as a cofactor.

It carries out the reaction a 3'-end 3'-phospho-ribonucleotide-RNA + a 5'-end dephospho-ribonucleoside-RNA + GTP = a ribonucleotidyl-ribonucleotide-RNA + GMP + diphosphate. The catalysed reaction is a 3'-end 2',3'-cyclophospho-ribonucleotide-RNA + a 5'-end dephospho-ribonucleoside-RNA + GTP + H2O = a ribonucleotidyl-ribonucleotide-RNA + GMP + diphosphate + H(+). Its function is as follows. Catalytic subunit of the tRNA-splicing ligase complex that acts by directly joining spliced tRNA halves to mature-sized tRNAs by incorporating the precursor-derived splice junction phosphate into the mature tRNA as a canonical 3',5'-phosphodiester. May act as an RNA ligase with broad substrate specificity, and may function toward other RNAs. The polypeptide is RNA-splicing ligase RtcB homolog (Ostreococcus lucimarinus (strain CCE9901)).